A 382-amino-acid polypeptide reads, in one-letter code: Flap endonuclease 1 (382 aa).

Residues 1–104 (MGIKGLSQVI…GELEKRSERR (104 aa)) form an N-domain region. Aspartate 34 is a Mg(2+) binding site. DNA-binding residues include arginine 47 and arginine 70. The Mg(2+) site is built by aspartate 86, glutamate 158, glutamate 160, aspartate 179, and aspartate 181. Positions 122-253 (EAEKFERRLV…KKAVELIRQH (132 aa)) are I-domain. Residue glutamate 158 coordinates DNA. Residues glycine 231 and aspartate 233 each coordinate DNA. Mg(2+) is bound at residue aspartate 233. An interaction with PCNA region spans residues 336–344 (TQGRIDSFF). A disordered region spans residues 358-382 (KRKAEEAEKAKKGAKKGGPPKKRAK). Residues 359 to 368 (RKAEEAEKAK) show a composition bias toward basic and acidic residues. Residues 369–382 (KGAKKGGPPKKRAK) are compositionally biased toward basic residues.

The protein belongs to the XPG/RAD2 endonuclease family. FEN1 subfamily. As to quaternary structure, interacts with PCNA. Three molecules of crn-1 bind to one PCNA trimer with each molecule binding to one PCNA monomer. PCNA stimulates the nuclease activity without altering cleavage specificity. Interacts with cps-6. Requires Mg(2+) as cofactor. Post-translationally, phosphorylated. Phosphorylation upon DNA damage induces relocalization to the nuclear plasma.

It is found in the nucleus. It localises to the nucleolus. The protein resides in the nucleoplasm. The protein localises to the mitochondrion. Its function is as follows. Structure-specific nuclease with 5'-flap endonuclease and 5'-3' exonuclease activities involved in DNA replication and repair. During DNA replication, cleaves the 5'-overhanging flap structure that is generated by displacement synthesis when DNA polymerase encounters the 5'-end of a downstream Okazaki fragment. It enters the flap from the 5'-end and then tracks to cleave the flap base, leaving a nick for ligation. Also involved in the long patch base excision repair (LP-BER) pathway, by cleaving within the apurinic/apyrimidinic (AP) site-terminated flap. Acts as a genome stabilization factor that prevents flaps from equilibrating into structures that lead to duplications and deletions. Also possesses 5'-3' exonuclease activity on nicked or gapped double-stranded DNA, and exhibits RNase H activity. Also involved in replication and repair of rDNA and in repairing mitochondrial DNA. Can associate and cooperate with cps-6 to promote stepwise DNA fragmentation, utilizing the endonuclease activity of cps-6 and both of its own 5'-3' exonuclease activity and gap-dependent endonuclease activity. May play a critical role in switching the state of cells from DNA replication/repair to DNA degradation during apoptosis. The chain is Flap endonuclease 1 from Caenorhabditis elegans.